The primary structure comprises 772 residues: Semaphorin-3A (772 aa).

The N-terminal stretch at 1–22 is a signal peptide; it reads MGWLRGIALLSLGVLLAGRVNC. Positions 31–514 constitute a Sema domain; that stretch reads RLKLSYKEML…SATGVSQLPL (484 aa). N-linked (GlcNAc...) asparagine glycosylation occurs at Asn53. A disulfide bridge links Cys103 with Cys114. A glycan (N-linked (GlcNAc...) asparagine) is linked at Asn125. 4 disulfides stabilise this stretch: Cys132–Cys141, Cys269–Cys381, Cys293–Cys341, and Cys517–Cys535. Residues 576 to 665 enclose the Ig-like C2-type domain; it reads PSGQTLEEKI…GFIQTLLKVT (90 aa). Asn591 is a glycosylation site (N-linked (GlcNAc...) asparagine). A disulfide bridge connects residues Cys650 and Cys723. The disordered stretch occupies residues 730 to 772; it reads DRKQRRQRPANAQVNTNKWKHLQENKKGRNRRTHEFERAPRSV. A compositionally biased stretch (basic and acidic residues) spans 750-772; it reads HLQENKKGRNRRTHEFERAPRSV.

It belongs to the semaphorin family. As to expression, expressed at relatively high levels in brain and muscle, moderate levels in lung, bursa, and heart and virtually absent in liver. Collapsin-1, -2, -3, and -5 bind to overlapping but distinct axon tracts.

It is found in the secreted. In terms of biological role, induces the collapse and paralysis of neuronal growth cones. Could serve as a ligand that guides specific growth cones by a motility-inhibiting mechanism. Binds to neuropilin. In Gallus gallus (Chicken), this protein is Semaphorin-3A (SEMA3A).